A 214-amino-acid polypeptide reads, in one-letter code: Redox-sensing transcriptional repressor Rex (214 aa).

Residues 17–56 (LYYRIFKRFHADQVEKASSKQIADAMGIDSATVRRDFSYF) constitute a DNA-binding region (H-T-H motif). NAD(+) is bound at residue 91–96 (GCGNIG).

It belongs to the transcriptional regulatory Rex family. Homodimer.

The protein resides in the cytoplasm. Functionally, modulates transcription in response to changes in cellular NADH/NAD(+) redox state. The polypeptide is Redox-sensing transcriptional repressor Rex (Streptococcus pyogenes serotype M1).